We begin with the raw amino-acid sequence, 251 residues long: 2-C-methyl-D-erythritol 4-phosphate cytidylyltransferase (251 aa).

It belongs to the IspD/TarI cytidylyltransferase family. IspD subfamily.

It carries out the reaction 2-C-methyl-D-erythritol 4-phosphate + CTP + H(+) = 4-CDP-2-C-methyl-D-erythritol + diphosphate. Its pathway is isoprenoid biosynthesis; isopentenyl diphosphate biosynthesis via DXP pathway; isopentenyl diphosphate from 1-deoxy-D-xylulose 5-phosphate: step 2/6. Functionally, catalyzes the formation of 4-diphosphocytidyl-2-C-methyl-D-erythritol from CTP and 2-C-methyl-D-erythritol 4-phosphate (MEP). The polypeptide is 2-C-methyl-D-erythritol 4-phosphate cytidylyltransferase (Cupriavidus pinatubonensis (strain JMP 134 / LMG 1197) (Cupriavidus necator (strain JMP 134))).